The primary structure comprises 1035 residues: DNA polymerase catalytic subunit (1035 aa).

Belongs to the DNA polymerase type-B family.

It localises to the host nucleus. It catalyses the reaction DNA(n) + a 2'-deoxyribonucleoside 5'-triphosphate = DNA(n+1) + diphosphate. This chain is DNA polymerase catalytic subunit (UL54), found in Macaca mulatta (Rhesus macaque).